Reading from the N-terminus, the 199-residue chain is Inner membrane protein E199L (199 aa).

An N-linked (GlcNAc...) asparagine; by host glycan is attached at Asn131. A helical transmembrane segment spans residues 150–170; that stretch reads INVMNHPFLTLILIILILVII.

The protein belongs to the asfivirus E199L family. In terms of assembly, interacts with host PYCR2; this interaction results in autophagy activation.

It localises to the virion membrane. Its subcellular location is the host membrane. Functionally, essential for viral fusion with host endosomal membrane and core release. Not required for virus morphogenesis and egress. Induces complete autophagy through the interaction with and down-regulation of host PYCR2. The chain is Inner membrane protein E199L from African swine fever virus (isolate Pig/Kenya/KEN-50/1950) (ASFV).